The sequence spans 396 residues: Elongation factor Tu 1 (396 aa).

Residues 10–206 form the tr-type G domain; it reads KPHVNVGTIG…ALDTYIPTPE (197 aa). The tract at residues 19–26 is G1; the sequence is GHVDHGKT. 19-26 lines the GTP pocket; it reads GHVDHGKT. Thr-26 is a binding site for Mg(2+). The G2 stretch occupies residues 60 to 64; sequence GITIN. A G3 region spans residues 81-84; it reads DCPG. GTP is bound by residues 81–85 and 136–139; these read DCPGH and NKAD. Residues 136-139 are G4; sequence NKAD. The G5 stretch occupies residues 174 to 176; it reads SAK.

The protein belongs to the TRAFAC class translation factor GTPase superfamily. Classic translation factor GTPase family. EF-Tu/EF-1A subfamily. In terms of assembly, monomer.

The protein resides in the cytoplasm. It carries out the reaction GTP + H2O = GDP + phosphate + H(+). Functionally, GTP hydrolase that promotes the GTP-dependent binding of aminoacyl-tRNA to the A-site of ribosomes during protein biosynthesis. This chain is Elongation factor Tu 1, found in Methylobacillus flagellatus (strain ATCC 51484 / DSM 6875 / VKM B-1610 / KT).